Here is a 405-residue protein sequence, read N- to C-terminus: NADH-quinone oxidoreductase subunit D (405 aa).

The protein belongs to the complex I 49 kDa subunit family. In terms of assembly, NDH-1 is composed of 14 different subunits. Subunits NuoB, C, D, E, F, and G constitute the peripheral sector of the complex.

The protein resides in the cell inner membrane. It catalyses the reaction a quinone + NADH + 5 H(+)(in) = a quinol + NAD(+) + 4 H(+)(out). In terms of biological role, NDH-1 shuttles electrons from NADH, via FMN and iron-sulfur (Fe-S) centers, to quinones in the respiratory chain. The immediate electron acceptor for the enzyme in this species is believed to be ubiquinone. Couples the redox reaction to proton translocation (for every two electrons transferred, four hydrogen ions are translocated across the cytoplasmic membrane), and thus conserves the redox energy in a proton gradient. The polypeptide is NADH-quinone oxidoreductase subunit D (Ruegeria pomeroyi (strain ATCC 700808 / DSM 15171 / DSS-3) (Silicibacter pomeroyi)).